Reading from the N-terminus, the 224-residue chain is Response regulator protein GraR (224 aa).

One can recognise a Response regulatory domain in the interval 2–115 (QILLVEDDNT…VLIAKLQAIY (114 aa)). Residue Asp51 is modified to 4-aspartylphosphate. Positions 126–224 (KRTLTWQDAI…KVGKGYMAHE (99 aa)) form a DNA-binding region, ompR/PhoB-type. Residues Thr128, Thr130, and Thr149 each carry the phosphothreonine modification.

In terms of assembly, interacts with GraX. Post-translationally, phosphorylated by GraS. Phosphorylated by Stk1; phosphorylation increases the DNA-binding activity of GraR.

It is found in the cytoplasm. Member of the two-component regulatory system GraR/GraS involved in resistance against cationic antimicrobial peptides (CAMPs). Upon phosphorylation by GraS, functions as a transcription regulator by direct binding to promoter regions of target genes such as adhesins, exoproteins, transporters, toxins, and proteins involved in cell wall synthesis. Down-regulates the expression of many genes involved in RNA and amino acid synthesis or glycolysis. This chain is Response regulator protein GraR (graR), found in Staphylococcus aureus (strain bovine RF122 / ET3-1).